We begin with the raw amino-acid sequence, 462 residues long: Glycoprotein endo-alpha-1,2-mannosidase (462 aa).

Residues 1–8 (MAKFRRGT) lie on the Cytoplasmic side of the membrane. The chain crosses the membrane as a helical; Signal-anchor for type II membrane protein span at residues 9-29 (CIILALFILFIFSLMMGLKML). Over 30–462 (RPNTATFGAP…YALDHQLPVS (433 aa)) the chain is Lumenal. Positions 60–462 (DFQKSDRINS…YALDHQLPVS (403 aa)) are catalytic.

It belongs to the glycosyl hydrolase 99 family. In terms of processing, undergoes proteolytic cleavage in the C-terminal region.

The protein localises to the golgi apparatus membrane. The enzyme catalyses N-{alpha-Glc-(1-&gt;3)-alpha-Man-(1-&gt;2)-alpha-Man-(1-&gt;2)-alpha-Man-(1-&gt;3)-[alpha-Man-(1-&gt;2)-alpha-Man-(1-&gt;3)-[alpha-Man-(1-&gt;2)-alpha-Man-(1-&gt;6)]-alpha-Man-(1-&gt;6)]-beta-Man-(1-&gt;4)-beta-GlcNAc-(1-&gt;4)-beta-GlcNAc}-L-asparaginyl-[protein] + H2O = alpha-D-glucosyl-(1-&gt;3)-D-mannopyranose + N(4)-{alpha-D-Man-(1-&gt;2)-alpha-D-Man-(1-&gt;3)-[alpha-D-Man-(1-&gt;2)-alpha-D-Man-(1-&gt;3)-[alpha-D-Man-(1-&gt;2)-alpha-D-Man-(1-&gt;6)]-alpha-D-Man-(1-&gt;6)]-beta-D-Man-(1-&gt;4)-beta-D-GlaNAc-(1-&gt;4)-beta-D-GlcNAc}-L-asparaginyl-[protein] (N-glucan mannose isomer 8A1,2,3B1,2). In Pongo abelii (Sumatran orangutan), this protein is Glycoprotein endo-alpha-1,2-mannosidase (MANEA).